Here is a 395-residue protein sequence, read N- to C-terminus: Nuclear hormone receptor family member nhr-10 (395 aa).

Residues 15–90 (EEVCLVCSDI…VGMDRNAIQQ (76 aa)) constitute a DNA-binding region (nuclear receptor). 2 consecutive NR C4-type zinc fingers follow at residues 18–38 (CLVC…CNGC) and 54–78 (CQFQ…FEKC). The NR LBD domain maps to 152 to 392 (PSRTLIEAVV…TFAKQLLFGI (241 aa)).

This sequence belongs to the nuclear hormone receptor family.

The protein localises to the nucleus. Probable transcription factor that acts in a feed-forward loop with nhr-68 to activate genes involved in the vitamin B12-independent breakdown of the short-chain fatty acid propionate. This pathway is triggered in response to a diet low in vitamin B12, when canonical vitamin B12-dependent propionate breakdown cannot function; the resulting accumulation of propionate is probably sensed by nhr-10 and/or nhr-68. This is Nuclear hormone receptor family member nhr-10 (nhr-10) from Caenorhabditis elegans.